Reading from the N-terminus, the 195-residue chain is Probable nicotinate-nucleotide adenylyltransferase (195 aa).

It belongs to the NadD family.

The enzyme catalyses nicotinate beta-D-ribonucleotide + ATP + H(+) = deamido-NAD(+) + diphosphate. It functions in the pathway cofactor biosynthesis; NAD(+) biosynthesis; deamido-NAD(+) from nicotinate D-ribonucleotide: step 1/1. Catalyzes the reversible adenylation of nicotinate mononucleotide (NaMN) to nicotinic acid adenine dinucleotide (NaAD). The polypeptide is Probable nicotinate-nucleotide adenylyltransferase (Mesorhizobium japonicum (strain LMG 29417 / CECT 9101 / MAFF 303099) (Mesorhizobium loti (strain MAFF 303099))).